A 489-amino-acid chain; its full sequence is Zinc finger protein 58 (489 aa).

One can recognise a KRAB domain in the interval 2 to 73 (LSFWDVAIDF…KRQAAAAVHP (72 aa)). The segment at 78-100 (NKCKDFSKAFFCKSLLTQHQRIR) adopts a C2H2-type 1; degenerate zinc-finger fold. C2H2-type zinc fingers lie at residues 106 to 128 (FKCE…KRIH), 134 to 156 (YKCE…QRVH), 162 to 184 (YKCE…KRIH), 190 to 212 (YKCE…QKNH), 218 to 240 (YKCE…QRIH), 246 to 268 (YKCE…QIIH), 274 to 296 (YKCA…QRIH), 302 to 324 (CKCK…QRIH), 330 to 352 (YKCG…QRFH), 358 to 380 (YKCE…KLRH), 386 to 408 (YKCE…QKIH), 410 to 432 (YKCG…QRVH), 438 to 460 (HVCE…QLVH), and 466 to 488 (YKCE…QGIH).

It belongs to the krueppel C2H2-type zinc-finger protein family. As to expression, expressed in liver, testis and, at considerably lower levels, in brain, spleen and heart.

It localises to the nucleus. Functionally, may have a role during differentiation processes. This is Zinc finger protein 58 (Zfp58) from Mus musculus (Mouse).